A 22-amino-acid polypeptide reads, in one-letter code: RHGCCKGPKGCSSRECRPQHCC.

Intrachain disulfides connect Cys4–Cys16, Cys5–Cys21, and Cys11–Cys22. Residues Pro8 and Pro18 each carry the 4-hydroxyproline modification. Cys22 bears the Cysteine amide mark.

Belongs to the conotoxin M superfamily. In terms of tissue distribution, expressed by the venom duct.

The protein resides in the secreted. In terms of biological role, mu-conotoxins block voltage-gated sodium channels (Nav). This synthetic toxin reversibly and potently blocks rNav1.4/SCN4A (IC(50) is 9 nM) and rNav1.2/SCN2A (IC(50) is 40 nM). It also moderately blocks rNav1.1/SCN1A, rNav1.3/SCN3A, and rNav1.6/SCN8A. The block of SCN1A and SCN2A is modified when beta-subunits are coexpressed with alpha subunits. Hence, blocks of channels containing beta-1 and beta-3 subunits are more potent (compared to channels without beta subunits), whereas blocks of channels containing beta-2 and beta-4 subunits are less potent (compared to channels without beta subunits). This chain is Mu-conotoxin TIIIA, found in Conus tulipa (Fish-hunting cone snail).